The sequence spans 374 residues: Glycerophosphodiester phosphodiesterase GDPD2 (374 aa).

The region spanning 38–326 (FSVIGHRGIG…DFVEEIIEST (289 aa)) is the GP-PDE domain. Positions 330–349 (MIRPPPSSSPLPSPSKDDDV) are disordered. Pro residues predominate over residues 332-342 (RPPPSSSPLPS).

This sequence belongs to the glycerophosphoryl diester phosphodiesterase family. As to expression, expressed in roots, shoots, flowers and siliques.

The catalysed reaction is a sn-glycero-3-phosphodiester + H2O = an alcohol + sn-glycerol 3-phosphate + H(+). This is Glycerophosphodiester phosphodiesterase GDPD2 from Arabidopsis thaliana (Mouse-ear cress).